Consider the following 278-residue polypeptide: HTH-type transcriptional activator RhaS (278 aa).

Residues 174-272 enclose the HTH araC/xylS-type domain; sequence NLLLAWLEDH…NWSPRDIRQG (99 aa). 2 consecutive DNA-binding regions (H-T-H motif) follow at residues 191–212 and 239–262; these read DAVA…KQQT and VTDI…RREF.

As to quaternary structure, binds DNA as a dimer.

It is found in the cytoplasm. Its function is as follows. Activates expression of the rhaBAD and rhaT operons. The sequence is that of HTH-type transcriptional activator RhaS from Escherichia coli O127:H6 (strain E2348/69 / EPEC).